The chain runs to 95 residues: Co-chaperonin GroES (95 aa).

Belongs to the GroES chaperonin family. In terms of assembly, heptamer of 7 subunits arranged in a ring. Interacts with the chaperonin GroEL.

It is found in the cytoplasm. Functionally, together with the chaperonin GroEL, plays an essential role in assisting protein folding. The GroEL-GroES system forms a nano-cage that allows encapsulation of the non-native substrate proteins and provides a physical environment optimized to promote and accelerate protein folding. GroES binds to the apical surface of the GroEL ring, thereby capping the opening of the GroEL channel. This Bordetella bronchiseptica (strain ATCC BAA-588 / NCTC 13252 / RB50) (Alcaligenes bronchisepticus) protein is Co-chaperonin GroES.